The primary structure comprises 211 residues: MIFMFHSGAMELLKIAEKLYDKDSEKAVEVYDKAIKKAERIYDDYAKAVILSNIAKSLYSRGLTNKVIEVYNKAIKIAEESSKRDVILSKIIENLCSNRLIDKALEVVNKISDDSSKAIALSEIAKAQYNIGMHDEALKNYDKAIFITEGVFDDEIKSSILFEISRDFYNYGLVDKAFEVIGKIPYSKYRFRLLDKMAEDLHKNIKYIHGE.

This is an uncharacterized protein from Methanocaldococcus jannaschii (strain ATCC 43067 / DSM 2661 / JAL-1 / JCM 10045 / NBRC 100440) (Methanococcus jannaschii).